Reading from the N-terminus, the 442-residue chain is Phosphoglucosamine mutase (442 aa).

S98 functions as the Phosphoserine intermediate in the catalytic mechanism. S98, D236, D238, and D240 together coordinate Mg(2+). S98 carries the post-translational modification Phosphoserine.

The protein belongs to the phosphohexose mutase family. The cofactor is Mg(2+). Post-translationally, activated by phosphorylation.

It catalyses the reaction alpha-D-glucosamine 1-phosphate = D-glucosamine 6-phosphate. Functionally, catalyzes the conversion of glucosamine-6-phosphate to glucosamine-1-phosphate. This is Phosphoglucosamine mutase from Natranaerobius thermophilus (strain ATCC BAA-1301 / DSM 18059 / JW/NM-WN-LF).